The chain runs to 69 residues: Microcin H47 immunity protein MchI (69 aa).

Residues 1 to 6 lie on the Cytoplasmic side of the membrane; it reads MSYKKL. Residues 7 to 29 form a helical membrane-spanning segment; sequence YQLTAIFSLPLTILLVSLSSLRI. Residues 30–38 lie on the Periplasmic side of the membrane; sequence VGEGNSYVD. A helical membrane pass occupies residues 39–61; that stretch reads VFLSFIIFLGFIELIHGIRKILV. Residues 62–69 are Cytoplasmic-facing; sequence WSGWKNGS.

It is found in the cell membrane. Protects a microcin H47-producer cell against microcin H47. This chain is Microcin H47 immunity protein MchI (mchI), found in Escherichia coli.